A 114-amino-acid chain; its full sequence is MNISIEIKERDTDHIDIFVAGEIDAYTAPKVKEALEVYQVKEGIVLRIDLTEVSYMDSTGLGVFVGAFKSLRQRQSELVLFGLSDRLFRLFEITGLSDIIEIKNVEGEMNGNNA.

In terms of domain architecture, STAS spans 4–114 (SIEIKERDTD…VEGEMNGNNA (111 aa)). Serine 58 is modified (phosphoserine).

Belongs to the anti-sigma-factor antagonist family. Phosphorylated by RsbW on a serine residue.

Positive regulator of sigma-B activity. Non-phosphorylated RsbV binds to RsbW, preventing its association with sigma-B. When phosphorylated, releases RsbW, which is then free to complex with and inactivate sigma-B. The protein is Anti-sigma-B factor antagonist (rsbV) of Listeria innocua serovar 6a (strain ATCC BAA-680 / CLIP 11262).